Here is a 570-residue protein sequence, read N- to C-terminus: Fibropellin-3 (570 aa).

Positions 1–17 (MKVSLLAVLLLSIVAAT) are cleaved as a signal peptide. Positions 18-55 (YGQGECGSNPCENGSVCRDGEGTYICECQMGYDGQNCD) constitute an EGF-like 1 domain. 4 disulfide bridges follow: Cys-23/Cys-34, Cys-28/Cys-43, Cys-45/Cys-54, and Cys-62/Cys-88. Asn-30 is a glycosylation site (N-linked (GlcNAc...) asparagine). One can recognise a CUB domain in the interval 62–175 (CGYNIFESTG…RKGFRITFSS (114 aa)). An N-linked (GlcNAc...) asparagine glycan is attached at Asn-136. The region spanning 176 to 212 (DGDDCTPNPCLNGATCVDQVNDYQCICAPGFTGDNCE) is the EGF-like 2; calcium-binding domain. 22 cysteine pairs are disulfide-bonded: Cys-180/Cys-191, Cys-185/Cys-200, Cys-202/Cys-211, Cys-218/Cys-229, Cys-223/Cys-238, Cys-240/Cys-249, Cys-256/Cys-267, Cys-261/Cys-276, Cys-278/Cys-287, Cys-294/Cys-305, Cys-299/Cys-314, Cys-316/Cys-325, Cys-332/Cys-343, Cys-337/Cys-352, Cys-354/Cys-363, Cys-370/Cys-381, Cys-375/Cys-390, Cys-392/Cys-401, Cys-408/Cys-419, Cys-413/Cys-428, Cys-430/Cys-439, and Cys-445/Cys-521. The EGF-like 3; calcium-binding domain maps to 214 to 250 (DIDECASAPCRNGGACVDQVNGYTCNCIPGFNGVNCE). The EGF-like 4; calcium-binding domain maps to 252-288 (NINECASIPCLNGGICVDGINQFACTCLPGYTGILCE). Positions 290-326 (DINECASSPCQNGGSCTDAVNRYTCDCRAGFTGSNCE) constitute an EGF-like 5; calcium-binding domain. Positions 328–364 (NINECASSPCLNGGSCLDGVDGYVCQCLPNYTGTHCE) constitute an EGF-like 6; calcium-binding domain. A glycan (N-linked (GlcNAc...) asparagine) is linked at Asn-357. One can recognise an EGF-like 7 domain in the interval 366–402 (SLDACASLPCQNGGVCTNVGGDYVCECLPGYTGINCE). The EGF-like 8; calcium-binding domain occupies 404–440 (DINECASLPCQNGGECINGIAMYICQCRQGYAGVNCE). An Avidin-like domain is found at 443-562 (GFCDLEGVWF…GQDKWTRYEQ (120 aa)).

Homotetramer.

It localises to the secreted. The protein localises to the extracellular space. Functionally, forms the apical lamina, a component of the extracellular matrix. This is Fibropellin-3 (EGF3) from Strongylocentrotus purpuratus (Purple sea urchin).